Reading from the N-terminus, the 383-residue chain is Homeobox protein SHOOT MERISTEMLESS (383 aa).

Residues 37–58 (HQQHHGHDQQHQHQQQHDGYAY) are disordered. An ELK domain is found at 263–283 (ELKGQLLRKYSGYLGSLKQEF). The segment at residues 284-347 (MKKRKKGKLP…NQRKRHWKPS (64 aa)) is a DNA-binding region (homeobox; TALE-type).

The protein belongs to the TALE/KNOX homeobox family.

Its subcellular location is the nucleus. Required for shoot apical meristem formation during embryogenesis. Probably binds to the DNA sequence 5'-TGAC-3'. The chain is Homeobox protein SHOOT MERISTEMLESS (STM) from Brassica oleracea (Wild cabbage).